The primary structure comprises 277 residues: Deoxyguanosine kinase, mitochondrial (277 aa).

Residues 1-39 (MAAGRFLLRRLRASFRSPLRNALVDAPHARAMHDGGGPR) constitute a mitochondrion transit peptide. 45-53 (GNIAVGKST) lines the ATP pocket. The substrate site is built by E70, Y100, Q111, and R118. Catalysis depends on E141, which acts as the Proton acceptor. Substrate-binding residues include R142 and D147. ATP is bound at residue 206–208 (RDR). E211 contacts substrate. 254–256 (EDF) provides a ligand contact to ATP.

Belongs to the DCK/DGK family. In terms of assembly, homodimer. As to expression, spleen and thymus. Expressed at much lower levels in the brain and liver.

The protein localises to the mitochondrion. It localises to the cytoplasm. The catalysed reaction is 2'-deoxyguanosine + ATP = dGMP + ADP + H(+). The enzyme catalyses 2'-deoxyadenosine + ATP = dAMP + ADP + H(+). Functionally, phosphorylates deoxyguanosine and deoxyadenosine in the mitochondrial matrix, with the highest efficiency for deoxyguanosine. In non-replicating cells, where cytosolic dNTP synthesis is down-regulated, mtDNA synthesis depends solely on DGUOK and TK2. Phosphorylates certain nucleoside analogs. Widely used as target of antiviral and chemotherapeutic agents. In Mus musculus (Mouse), this protein is Deoxyguanosine kinase, mitochondrial (Dguok).